The sequence spans 162 residues: Transcriptional regulator MraZ (162 aa).

SpoVT-AbrB domains are found at residues 11-62 (EHPS…GLSV) and 98-141 (AVEC…SRDT).

This sequence belongs to the MraZ family. As to quaternary structure, forms oligomers.

Its subcellular location is the cytoplasm. It localises to the nucleoid. The chain is Transcriptional regulator MraZ from Pelobacter propionicus (strain DSM 2379 / NBRC 103807 / OttBd1).